The primary structure comprises 556 residues: Peptide chain release factor 3 (556 aa).

The 270-residue stretch at 28-297 (QQRRNFAIIS…AFLDYALKPG (270 aa)) folds into the tr-type G domain. GTP-binding positions include 37–44 (SHPDAGKT), 105–109 (DTPGH), and 159–162 (NKMD).

This sequence belongs to the TRAFAC class translation factor GTPase superfamily. Classic translation factor GTPase family. PrfC subfamily.

The protein localises to the cytoplasm. Functionally, increases the formation of ribosomal termination complexes and stimulates activities of RF-1 and RF-2. It binds guanine nucleotides and has strong preference for UGA stop codons. It may interact directly with the ribosome. The stimulation of RF-1 and RF-2 is significantly reduced by GTP and GDP, but not by GMP. This chain is Peptide chain release factor 3, found in Synechococcus sp. (strain ATCC 27144 / PCC 6301 / SAUG 1402/1) (Anacystis nidulans).